Reading from the N-terminus, the 647-residue chain is Glutamyl-tRNA(Gln) amidotransferase subunit B, mitochondrial (647 aa).

The disordered stretch occupies residues 87-106 (QAKALKKSGHKKKKSSDNQT). Over residues 90–100 (ALKKSGHKKKK) the composition is skewed to basic residues.

The protein belongs to the GatB/GatE family. GatB subfamily. In terms of assembly, subunit of the heterotrimeric GatCAB amidotransferase (AdT) complex, composed of A, B and C subunits.

Its subcellular location is the mitochondrion. The enzyme catalyses L-glutamyl-tRNA(Gln) + L-glutamine + ATP + H2O = L-glutaminyl-tRNA(Gln) + L-glutamate + ADP + phosphate + H(+). In terms of biological role, allows the formation of correctly charged Gln-tRNA(Gln) through the transamidation of misacylated Glu-tRNA(Gln) in the mitochondria. The reaction takes place in the presence of glutamine and ATP through an activated gamma-phospho-Glu-tRNA(Gln). In Neurospora crassa (strain ATCC 24698 / 74-OR23-1A / CBS 708.71 / DSM 1257 / FGSC 987), this protein is Glutamyl-tRNA(Gln) amidotransferase subunit B, mitochondrial.